We begin with the raw amino-acid sequence, 205 residues long: Recombination protein RecR (205 aa).

Residues 58-75 form a C4-type zinc finger; the sequence is CSECQNVTDRDSDPCVLC. The 100-residue stretch at 83 to 182 folds into the Toprim domain; the sequence is TVICVVESPV…AVSKIARGIP (100 aa).

Belongs to the RecR family.

Its function is as follows. May play a role in DNA repair. It seems to be involved in an RecBC-independent recombinational process of DNA repair. It may act with RecF and RecO. The sequence is that of Recombination protein RecR from Chlorobium phaeobacteroides (strain DSM 266 / SMG 266 / 2430).